The following is a 534-amino-acid chain: Probable cytochrome c oxidase subunit 1 (534 aa).

The next 8 helical transmembrane spans lie at 35 to 55 (IMYI…SLLF), 76 to 96 (VLIT…ALFS), 97 to 117 (GFGN…FPRL), 120 to 140 (ISFW…FIDG), 165 to 185 (VAIF…INLI), 202 to 222 (PLFV…MPVL), 254 to 274 (LFWF…FGIV), and 286 to 306 (IFGY…GFIV). Residue His81 coordinates Fe(II)-heme a. Cu cation-binding residues include His260 and Tyr264. Positions 260–264 (HPEVY) form a cross-link, 1'-histidyl-3'-tyrosine (His-Tyr). Cu cation contacts are provided by His309 and His310. The next 2 helical transmembrane spans lie at 320 to 340 (ALIY…IKIF) and 357 to 377 (MLFA…GIIL). His395 provides a ligand contact to heme a3. Transmembrane regions (helical) follow at residues 396–416 (FHYT…YYWF), 433–453 (FWIT…LGLA), and 475–495 (IGAG…FYTL). Fe(II)-heme a is bound at residue His397.

The protein belongs to the heme-copper respiratory oxidase family.

It is found in the cell membrane. The catalysed reaction is 4 Fe(II)-[cytochrome c] + O2 + 8 H(+)(in) = 4 Fe(III)-[cytochrome c] + 2 H2O + 4 H(+)(out). Its pathway is energy metabolism; oxidative phosphorylation. Functionally, cytochrome c oxidase is the component of the respiratory chain that catalyzes the reduction of oxygen to water. Subunits 1-3 form the functional core of the enzyme complex. CO I is the catalytic subunit of the enzyme. Electrons originating in cytochrome c are transferred via the copper A center of subunit 2 and heme A of subunit 1 to the bimetallic center formed by heme A3 and copper B. The chain is Probable cytochrome c oxidase subunit 1 (ctaD) from Rickettsia prowazekii (strain Madrid E).